We begin with the raw amino-acid sequence, 409 residues long: Short chain dehydrogenase sirS (409 aa).

6 residues coordinate NADP(+): V49, L68, K195, V288, T290, and A299. Residues 306 to 332 form a disordered region; the sequence is GVGPEGAGEEEGKGEAEGGAKGATGWS.

Belongs to the short-chain dehydrogenases/reductases (SDR) family. Highly divergent.

Its pathway is mycotoxin biosynthesis. Functionally, short chain dehydrogenase; part of the gene cluster that mediates the biosynthesis of sirodesmin PL, an epipolythiodioxopiperazine (ETP) characterized by a disulfide bridged cyclic dipeptide and that acts as a phytotoxin which is involved in the blackleg didease of canola. SirD catalyzes the O-prenylation of L-tyrosine (L-Tyr) in the presence of dimethylallyl diphosphate (DMAPP) to yield 4-O-dimethylallyl-L-Tyr, and therefore represents probably the first pathway-specific enzyme in the biosynthesis of sirodesmin PL. 4-O-dimethylallyl-L-Tyr, then undergoes condensation with L-Ser in a reaction catalyzed by the non-ribosomal peptide synthase sirP to form the diketopiperazine (DKP) backbone. Further bishydroxylation of the DKP performed by the cytochrome P450 monooxygenase sirC leads to the production of the intermediate phomamide. This step is essential to form the reactive thiol group required for toxicity of sirodesmin PL. The next steps of sirodesmin biosynthesis are not well understood yet, but some predictions could be made from intermediate compounds identification. Phomamide is converted into phomalizarine via oxidation, probably by sirT. Further oxidation, methylation (by sirM or sirN) and reduction steps convert phomalizarine to deacetyl sirodesmin. Finally, acetyltransferase sirH probably acetylates deacetyl sirodesmin to produce sirodesmin PL. This is Short chain dehydrogenase sirS from Leptosphaeria maculans (Blackleg fungus).